The primary structure comprises 395 residues: MSSIHDLDFIKEKLEELKKAGVYRKLTVLESPSGPRSIIDGKEVINLSSNNYLGLANHPRLKKAAIEAIEKWGVGAGAVRTIIGNMTIHEELERKLAEFKREEAVLTFQSGFTANMGVIQAVVDKGDVIISDELNHASIIDGCRLSRADVVIYKHSDMEDLERVLKEVKDKYRVKMIITDGVFSMDGDIAKLPEIVKLAEKYSAITYVDDAHASGVLGESGRGSADHFNLHGRIDIQIGTLSKAIGVVGGYVAGKRELIEWLNHRGRPFLFSTALPPAAVAASIEAINILSESDALTRKLWDNAKYFKEKLKSLGFDTGKSETPITPVIIGEETKALEFSRKLFEEGVFAQGIVYPTVPKNKARVRTIVTAAHTKEDLDAALKAFEKVGKQLNII.

Substrate is bound at residue R24. Pyridoxal 5'-phosphate is bound at residue G111–F112. H136 contributes to the substrate binding site. Residues S184, D209–H212, and T240–K243 contribute to the pyridoxal 5'-phosphate site. N6-(pyridoxal phosphate)lysine is present on K243. T357 is a binding site for substrate.

The protein belongs to the class-II pyridoxal-phosphate-dependent aminotransferase family. BioF subfamily. Homodimer. Pyridoxal 5'-phosphate serves as cofactor.

The catalysed reaction is 6-carboxyhexanoyl-[ACP] + L-alanine + H(+) = (8S)-8-amino-7-oxononanoate + holo-[ACP] + CO2. It participates in cofactor biosynthesis; biotin biosynthesis. In terms of biological role, catalyzes the decarboxylative condensation of pimeloyl-[acyl-carrier protein] and L-alanine to produce 8-amino-7-oxononanoate (AON), [acyl-carrier protein], and carbon dioxide. The sequence is that of 8-amino-7-oxononanoate synthase from Thermoanaerobacter pseudethanolicus (strain ATCC 33223 / 39E) (Clostridium thermohydrosulfuricum).